The primary structure comprises 121 residues: Large ribosomal subunit protein bL21c (121 aa).

This sequence belongs to the bacterial ribosomal protein bL21 family. Part of the 50S ribosomal subunit.

The protein resides in the plastid. It localises to the chloroplast. In terms of biological role, this protein binds to 23S rRNA. In Huperzia lucidula (Shining clubmoss), this protein is Large ribosomal subunit protein bL21c.